The chain runs to 248 residues: tRNA pseudouridine synthase A (248 aa).

Asp-55 functions as the Nucleophile in the catalytic mechanism. Residue Tyr-114 coordinates substrate.

The protein belongs to the tRNA pseudouridine synthase TruA family. As to quaternary structure, homodimer.

The catalysed reaction is uridine(38/39/40) in tRNA = pseudouridine(38/39/40) in tRNA. Its function is as follows. Formation of pseudouridine at positions 38, 39 and 40 in the anticodon stem and loop of transfer RNAs. This chain is tRNA pseudouridine synthase A, found in Rhodopseudomonas palustris (strain ATCC BAA-98 / CGA009).